Here is a 260-residue protein sequence, read N- to C-terminus: 3-dehydroquinate dehydratase (260 aa).

Residues 50–52 (EWR) and R86 each bind 3-dehydroquinate. H148 (proton donor/acceptor) is an active-site residue. Residue K175 is the Schiff-base intermediate with substrate of the active site. 3-dehydroquinate-binding residues include R217, S236, and Q240.

This sequence belongs to the type-I 3-dehydroquinase family. As to quaternary structure, homodimer.

The enzyme catalyses 3-dehydroquinate = 3-dehydroshikimate + H2O. Its pathway is metabolic intermediate biosynthesis; chorismate biosynthesis; chorismate from D-erythrose 4-phosphate and phosphoenolpyruvate: step 3/7. In terms of biological role, involved in the third step of the chorismate pathway, which leads to the biosynthesis of aromatic amino acids. Catalyzes the cis-dehydration of 3-dehydroquinate (DHQ) and introduces the first double bond of the aromatic ring to yield 3-dehydroshikimate. In Aromatoleum aromaticum (strain DSM 19018 / LMG 30748 / EbN1) (Azoarcus sp. (strain EbN1)), this protein is 3-dehydroquinate dehydratase.